The sequence spans 261 residues: Dienlactone hydrolase 1 (261 aa).

Catalysis depends on residues Cys147, Asp194, and His226.

Belongs to the dienelactone hydrolase family.

It functions in the pathway xenobiotic degradation. In terms of biological role, dienlactone hydrolase; part of the Fusarium detoxification of benzoxazolinone cluster 1 (FDB1) involved in the degradation of benzoxazolinones produced by the host plant. Maize, wheat, and rye produce the 2 benzoxazinone phytoanticipins 2,4-dihy-droxy-7-methoxy-1,4-benzoxazin-3-one (DIMBOA) and 2,4-dihydroxy-1,4-benzoxazin-3-one (DIBOA) that, due to their inherent instability once released, spontaneously degrade to the more stable corresponding benzoxazolinones, 6-methoxy-2-benzoxazolinone (MBOA) and 2-benzoxazolinone (BOA), respectively. The first step in the detoxification of benzoxazolinones involves the hydrolysis of the cyclic ester bond of benzoxazolinones by the FDB1 cluster gamma-lactamase MBL1 to aminophenols. MBL1 is able to convert BOA into 2-aminophenol (2-AP), as well as MBOA into 5-methoxy-2-aminophenol (2-AMP). The FDB2 cluster N-malonyltransferase FDB2/NAT1 then metabolizes aminophenols via N-malonylation to non-toxic malonamic acids. FDB2/NAT1 converts 2-AP into N-(2-hydroxyphenyl) malonamic acid (HPMA) and 2-AMP into N-(2-hydroxy-4-methoxyphenyl) malonamic acid (HMPMA). The duplicated dienlactone hydrolases DLH1 and DLH2 may provide redundant function for hydrolyzing the lactone moiety in the BOA molecule. The roles of the amidases and other enzymes encoded by the 2 FDB clusters have not been identified so far. The polypeptide is Dienlactone hydrolase 1 (Gibberella moniliformis (strain M3125 / FGSC 7600) (Maize ear and stalk rot fungus)).